Here is a 138-residue protein sequence, read N- to C-terminus: Secreted RxLR effector protein 51 (138 aa).

The N-terminal stretch at 1-19 (MRSSTILFVLGVAMVAVNG) is a signal peptide. Residues 38–53 (RLLRSNSGKHKTDEER) carry the RxLR-dEER motif. N101 is a glycosylation site (N-linked (GlcNAc...) asparagine).

The protein belongs to the RxLR effector family.

The protein resides in the secreted. Its subcellular location is the host nucleus. Functionally, secreted effector that completely suppresses the host cell death induced by cell death-inducing proteins. The protein is Secreted RxLR effector protein 51 of Plasmopara viticola (Downy mildew of grapevine).